A 285-amino-acid polypeptide reads, in one-letter code: Bifunctional protein FolD (285 aa).

Residues 165-167 (GAS) and Ile-232 each bind NADP(+).

It belongs to the tetrahydrofolate dehydrogenase/cyclohydrolase family. Homodimer.

The catalysed reaction is (6R)-5,10-methylene-5,6,7,8-tetrahydrofolate + NADP(+) = (6R)-5,10-methenyltetrahydrofolate + NADPH. It carries out the reaction (6R)-5,10-methenyltetrahydrofolate + H2O = (6R)-10-formyltetrahydrofolate + H(+). The protein operates within one-carbon metabolism; tetrahydrofolate interconversion. Its function is as follows. Catalyzes the oxidation of 5,10-methylenetetrahydrofolate to 5,10-methenyltetrahydrofolate and then the hydrolysis of 5,10-methenyltetrahydrofolate to 10-formyltetrahydrofolate. This is Bifunctional protein FolD from Sulfurihydrogenibium sp. (strain YO3AOP1).